The sequence spans 343 residues: Insertion element IS630 uncharacterized 39 kDa protein (343 aa).

The protein is Insertion element IS630 uncharacterized 39 kDa protein of Shigella sonnei.